A 101-amino-acid chain; its full sequence is Urease subunit gamma (101 aa).

The protein belongs to the urease gamma subunit family. As to quaternary structure, heterotrimer of UreA (gamma), UreB (beta) and UreC (alpha) subunits. Three heterotrimers associate to form the active enzyme.

The protein resides in the cytoplasm. It carries out the reaction urea + 2 H2O + H(+) = hydrogencarbonate + 2 NH4(+). It functions in the pathway nitrogen metabolism; urea degradation; CO(2) and NH(3) from urea (urease route): step 1/1. The chain is Urease subunit gamma from Ureaplasma urealyticum (Ureaplasma urealyticum biotype 2).